Consider the following 408-residue polypeptide: Glutamate N-acetyltransferase (408 aa).

6 residues coordinate substrate: threonine 150, lysine 176, threonine 189, glutamate 271, asparagine 403, and threonine 408. Catalysis depends on threonine 189, which acts as the Nucleophile.

The protein belongs to the ArgJ family. In terms of assembly, heterotetramer of two alpha and two beta chains.

Its subcellular location is the cytoplasm. It catalyses the reaction N(2)-acetyl-L-ornithine + L-glutamate = N-acetyl-L-glutamate + L-ornithine. Its pathway is amino-acid biosynthesis; L-arginine biosynthesis; L-ornithine and N-acetyl-L-glutamate from L-glutamate and N(2)-acetyl-L-ornithine (cyclic): step 1/1. In terms of biological role, catalyzes the transfer of the acetyl group from N(2)-acetylornithine to glutamate, forming N-acetylglutamate and L-ornithine. This is Glutamate N-acetyltransferase from Methanococcus maripaludis (strain C6 / ATCC BAA-1332).